A 293-amino-acid polypeptide reads, in one-letter code: Acetyl-coenzyme A carboxylase carboxyl transferase subunit beta (293 aa).

Positions L29–T293 constitute a CoA carboxyltransferase N-terminal domain. C33, C36, C52, and C55 together coordinate Zn(2+). The segment at C33 to C55 adopts a C4-type zinc-finger fold.

It belongs to the AccD/PCCB family. Acetyl-CoA carboxylase is a heterohexamer composed of biotin carboxyl carrier protein (AccB), biotin carboxylase (AccC) and two subunits each of ACCase subunit alpha (AccA) and ACCase subunit beta (AccD). The cofactor is Zn(2+).

Its subcellular location is the cytoplasm. It catalyses the reaction N(6)-carboxybiotinyl-L-lysyl-[protein] + acetyl-CoA = N(6)-biotinyl-L-lysyl-[protein] + malonyl-CoA. The protein operates within lipid metabolism; malonyl-CoA biosynthesis; malonyl-CoA from acetyl-CoA: step 1/1. In terms of biological role, component of the acetyl coenzyme A carboxylase (ACC) complex. Biotin carboxylase (BC) catalyzes the carboxylation of biotin on its carrier protein (BCCP) and then the CO(2) group is transferred by the transcarboxylase to acetyl-CoA to form malonyl-CoA. This is Acetyl-coenzyme A carboxylase carboxyl transferase subunit beta from Prochlorococcus marinus (strain MIT 9301).